The primary structure comprises 340 residues: Holliday junction branch migration complex subunit RuvB (340 aa).

Positions 1 to 184 (MNENLDPTNQ…FGIQSRLQYY (184 aa)) are large ATPase domain (RuvB-L). Residues Leu23, Arg24, Gly65, Lys68, Thr69, Thr70, 131-133 (EDF), Arg174, Tyr184, and Arg221 contribute to the ATP site. Thr69 is a binding site for Mg(2+). The tract at residues 185–255 (NAELLTTIVQ…IAKFALNALH (71 aa)) is small ATPAse domain (RuvB-S). The tract at residues 258–340 (AHGLDEMDNK…VKANVQGGLF (83 aa)) is head domain (RuvB-H). Residues Arg313 and Arg318 each coordinate DNA.

This sequence belongs to the RuvB family. As to quaternary structure, homohexamer. Forms an RuvA(8)-RuvB(12)-Holliday junction (HJ) complex. HJ DNA is sandwiched between 2 RuvA tetramers; dsDNA enters through RuvA and exits via RuvB. An RuvB hexamer assembles on each DNA strand where it exits the tetramer. Each RuvB hexamer is contacted by two RuvA subunits (via domain III) on 2 adjacent RuvB subunits; this complex drives branch migration. In the full resolvosome a probable DNA-RuvA(4)-RuvB(12)-RuvC(2) complex forms which resolves the HJ.

It localises to the cytoplasm. The catalysed reaction is ATP + H2O = ADP + phosphate + H(+). The RuvA-RuvB-RuvC complex processes Holliday junction (HJ) DNA during genetic recombination and DNA repair, while the RuvA-RuvB complex plays an important role in the rescue of blocked DNA replication forks via replication fork reversal (RFR). RuvA specifically binds to HJ cruciform DNA, conferring on it an open structure. The RuvB hexamer acts as an ATP-dependent pump, pulling dsDNA into and through the RuvAB complex. RuvB forms 2 homohexamers on either side of HJ DNA bound by 1 or 2 RuvA tetramers; 4 subunits per hexamer contact DNA at a time. Coordinated motions by a converter formed by DNA-disengaged RuvB subunits stimulates ATP hydrolysis and nucleotide exchange. Immobilization of the converter enables RuvB to convert the ATP-contained energy into a lever motion, pulling 2 nucleotides of DNA out of the RuvA tetramer per ATP hydrolyzed, thus driving DNA branch migration. The RuvB motors rotate together with the DNA substrate, which together with the progressing nucleotide cycle form the mechanistic basis for DNA recombination by continuous HJ branch migration. Branch migration allows RuvC to scan DNA until it finds its consensus sequence, where it cleaves and resolves cruciform DNA. This Flavobacterium psychrophilum (strain ATCC 49511 / DSM 21280 / CIP 103535 / JIP02/86) protein is Holliday junction branch migration complex subunit RuvB.